Here is a 1038-residue protein sequence, read N- to C-terminus: Kinesin-like protein KIN-5B (1038 aa).

The disordered stretch occupies residues 1 to 63 (MAQTPNPSRR…GGGGGGGSEM (63 aa)). Residues 24–34 (RPERRQLELRW) are compositionally biased toward basic and acidic residues. Positions 49–61 (GLTGGGGGGGGGS) are enriched in gly residues. Residues 69–410 (NVQVVLRCRP…LDYAYRAKSI (342 aa)) enclose the Kinesin motor domain. 154 to 161 (GQTGTGKT) contacts ATP. Positions 453 to 502 (QERFALEEAEKKTMRDKIEYLETQNKELKMNIESCKKEYLDLEEAHSRAN) form a coiled coil. The interval 1013–1038 (DKGKRYVDQGTRTPRSPLMPVNHYNK) is disordered.

The protein belongs to the TRAFAC class myosin-kinesin ATPase superfamily. Kinesin family. KIN-5/BimC subfamily.

The protein localises to the cytoplasm. It is found in the cytoskeleton. Its subcellular location is the spindle. Its function is as follows. Responsible for microtubule translocation. May be important for the organization of phragmoplast-specific arrays of microtubules. Plays an essential role in stabilizing the mitotic spindle. Required during mitotic cytokinesis. The sequence is that of Kinesin-like protein KIN-5B from Oryza sativa subsp. japonica (Rice).